Reading from the N-terminus, the 517-residue chain is Bifunctional purine biosynthesis protein PurH (517 aa).

The region spanning 1 to 145 (MSPLALVSVS…KNHKDVSVLV (145 aa)) is the MGS-like domain.

It belongs to the PurH family.

The enzyme catalyses (6R)-10-formyltetrahydrofolate + 5-amino-1-(5-phospho-beta-D-ribosyl)imidazole-4-carboxamide = 5-formamido-1-(5-phospho-D-ribosyl)imidazole-4-carboxamide + (6S)-5,6,7,8-tetrahydrofolate. It carries out the reaction IMP + H2O = 5-formamido-1-(5-phospho-D-ribosyl)imidazole-4-carboxamide. Its pathway is purine metabolism; IMP biosynthesis via de novo pathway; 5-formamido-1-(5-phospho-D-ribosyl)imidazole-4-carboxamide from 5-amino-1-(5-phospho-D-ribosyl)imidazole-4-carboxamide (10-formyl THF route): step 1/1. It functions in the pathway purine metabolism; IMP biosynthesis via de novo pathway; IMP from 5-formamido-1-(5-phospho-D-ribosyl)imidazole-4-carboxamide: step 1/1. The chain is Bifunctional purine biosynthesis protein PurH from Prochlorococcus marinus (strain MIT 9301).